We begin with the raw amino-acid sequence, 315 residues long: Neurogenic differentiation factor 4 (315 aa).

A disordered region spans residues 39–71 (ERGSIDGEEDDEEEEDGEKPKKRGPKKKKMTKA). Residues 44–55 (DGEEDDEEEEDG) show a composition bias toward acidic residues. Basic residues predominate over residues 58–70 (PKKRGPKKKKMTK). In terms of domain architecture, bHLH spans 78-130 (VRRVKANARERSRMHGLNDALENLRRVMPCYSKTQKLSKIETLRLARNYIWAL). Ser89 carries the post-translational modification Phosphoserine.

In terms of assembly, efficient DNA binding requires dimerization with another bHLH protein. Forms a heterodimer with the bHLH protein hes2, and weakly interacts with hey1/hrt1. Serine or threonine phosphorylation within the basic region may regulate neurogenic activity. As to expression, first expressed weakly at stage 12 in primary neuronal precursors. At stages 18 and 21, strongly expressed in the cranial ganglions, with weaker expression remaining in the spinal cord. Later, strongly expressed at sites of neuronal differentiation, namely the eye, forebrain and cranial ganglions.

The protein localises to the nucleus. Its function is as follows. Probably acts as a transcriptional activator. Mediates neuronal differentiation. Required for the regulation of amacrine cell fate specification in the retina. The protein is Neurogenic differentiation factor 4 (neurod4) of Xenopus laevis (African clawed frog).